We begin with the raw amino-acid sequence, 291 residues long: T-cell leukemia homeobox protein 3 (291 aa).

A disordered region spans residues 1–56; that stretch reads MEAPASAQTPHPHEPISFGIDQILNSPDQDSAPAPRGPDGASYLGGPPGGRPGATY. Residues 166 to 225 constitute a DNA-binding region (homeobox); sequence RKKPRTSFSRVQICELEKRFHRQKYLASAERAALAKSLKMTDAQVKTWFQNRRTKWRRQT.

The protein resides in the nucleus. This chain is T-cell leukemia homeobox protein 3 (TLX3), found in Homo sapiens (Human).